Consider the following 550-residue polypeptide: C-type lectin domain family 4 member F (550 aa).

Residues 1 to 42 are Cytoplasmic-facing; the sequence is MKEAELNRDVAKFCTDNQCVILQPQGLGPKSAAPMAPRTLRH. Residues 43-69 form a helical; Signal-anchor for type II membrane protein membrane-spanning segment; that stretch reads VQAIVALVVVTVFFSLLALFVVVLQPW. Residues 70-550 lie on the Extracellular side of the membrane; it reads RQKQNEDHPV…DWSVARTDQS (481 aa). Asn87, Asn93, Asn115, Asn132, Asn209, and Asn255 each carry an N-linked (GlcNAc...) asparagine glycan. Positions 438-538 constitute a C-type lectin domain; it reads NFCVSQGAHL…GTAYNWVCKK (101 aa). 2 disulfide bridges follow: Cys440-Cys536 and Cys516-Cys528.

In terms of tissue distribution, kupffer cells.

Its subcellular location is the membrane. Functionally, receptor with an affinity for galactose and fucose. Could be involved in endocytosis. This Rattus norvegicus (Rat) protein is C-type lectin domain family 4 member F (Clec4f).